A 163-amino-acid polypeptide reads, in one-letter code: Allophycocyanin alpha-B chain (163 aa).

Asparagine 71 carries the post-translational modification N4-methylasparagine. Cysteine 81 serves as a coordination point for (2R,3E)-phycocyanobilin.

This sequence belongs to the phycobiliprotein family. Heterodimer of an alpha and a beta chain. In terms of processing, contains one covalently linked bilin chromophore.

Its subcellular location is the cellular thylakoid membrane. Its function is as follows. Light-harvesting photosynthetic bile pigment-protein from the phycobiliprotein complex. Allophycocyanin has a maximum absorption at approximately 650 nanometers. This Synechococcus sp. (strain ATCC 27144 / PCC 6301 / SAUG 1402/1) (Anacystis nidulans) protein is Allophycocyanin alpha-B chain.